The primary structure comprises 312 residues: Beta-ketoacyl-[acyl-carrier-protein] synthase III (312 aa).

Active-site residues include Cys-112 and His-237. The ACP-binding stretch occupies residues 238 to 242 (QANIR). Asn-267 is an active-site residue.

It belongs to the thiolase-like superfamily. FabH family. As to quaternary structure, homodimer.

The protein localises to the cytoplasm. The enzyme catalyses malonyl-[ACP] + acetyl-CoA + H(+) = 3-oxobutanoyl-[ACP] + CO2 + CoA. Its pathway is lipid metabolism; fatty acid biosynthesis. Its function is as follows. Catalyzes the condensation reaction of fatty acid synthesis by the addition to an acyl acceptor of two carbons from malonyl-ACP. Catalyzes the first condensation reaction which initiates fatty acid synthesis and may therefore play a role in governing the total rate of fatty acid production. Possesses both acetoacetyl-ACP synthase and acetyl transacylase activities. Its substrate specificity determines the biosynthesis of branched-chain and/or straight-chain of fatty acids. This Oceanobacillus iheyensis (strain DSM 14371 / CIP 107618 / JCM 11309 / KCTC 3954 / HTE831) protein is Beta-ketoacyl-[acyl-carrier-protein] synthase III.